Here is a 71-residue protein sequence, read N- to C-terminus: Small ribosomal subunit protein bS21 (71 aa).

Belongs to the bacterial ribosomal protein bS21 family.

The chain is Small ribosomal subunit protein bS21 from Baumannia cicadellinicola subsp. Homalodisca coagulata.